A 401-amino-acid chain; its full sequence is NAD(P)H-quinone oxidoreductase subunit H, chloroplastic (401 aa).

This sequence belongs to the complex I 49 kDa subunit family. In terms of assembly, NDH is composed of at least 16 different subunits, 5 of which are encoded in the nucleus.

Its subcellular location is the plastid. It localises to the chloroplast thylakoid membrane. The enzyme catalyses a plastoquinone + NADH + (n+1) H(+)(in) = a plastoquinol + NAD(+) + n H(+)(out). The catalysed reaction is a plastoquinone + NADPH + (n+1) H(+)(in) = a plastoquinol + NADP(+) + n H(+)(out). NDH shuttles electrons from NAD(P)H:plastoquinone, via FMN and iron-sulfur (Fe-S) centers, to quinones in the photosynthetic chain and possibly in a chloroplast respiratory chain. The immediate electron acceptor for the enzyme in this species is believed to be plastoquinone. Couples the redox reaction to proton translocation, and thus conserves the redox energy in a proton gradient. The polypeptide is NAD(P)H-quinone oxidoreductase subunit H, chloroplastic (Aethionema cordifolium (Lebanon stonecress)).